The sequence spans 293 residues: Undecaprenyl-diphosphatase (293 aa).

A run of 7 helical transmembrane segments spans residues isoleucine 3 to proline 23, lysine 43 to phenylalanine 63, leucine 85 to isoleucine 105, leucine 109 to alanine 129, valine 203 to glutamate 223, isoleucine 238 to leucine 258, and phenylalanine 269 to isoleucine 289.

It belongs to the UppP family.

Its subcellular location is the cell inner membrane. It carries out the reaction di-trans,octa-cis-undecaprenyl diphosphate + H2O = di-trans,octa-cis-undecaprenyl phosphate + phosphate + H(+). Functionally, catalyzes the dephosphorylation of undecaprenyl diphosphate (UPP). Confers resistance to bacitracin. This chain is Undecaprenyl-diphosphatase, found in Ralstonia nicotianae (strain ATCC BAA-1114 / GMI1000) (Ralstonia solanacearum).